A 51-amino-acid chain; its full sequence is Large ribosomal subunit protein eL39 (51 aa).

This sequence belongs to the eukaryotic ribosomal protein eL39 family.

The protein is Large ribosomal subunit protein eL39 of Thermococcus sibiricus (strain DSM 12597 / MM 739).